We begin with the raw amino-acid sequence, 70 residues long: Conotoxin AbVIC (70 aa).

Residues 1 to 17 (VLIIAVLFLTACQLTTA) form the signal peptide. Positions 18–41 (ETSSRGKQKHRALRSTDKNSKLTR) are excised as a propeptide. The disordered stretch occupies residues 19 to 41 (TSSRGKQKHRALRSTDKNSKLTR). Intrachain disulfides connect C43-C57, C50-C61, and C56-C68.

Belongs to the conotoxin O1 superfamily. Expressed by the venom duct.

The protein resides in the secreted. The polypeptide is Conotoxin AbVIC (Conus abbreviatus (Abbreviated cone)).